The chain runs to 200 residues: dITP/XTP pyrophosphatase (200 aa).

Residue 8 to 13 (TGNQGK) participates in substrate binding. The active-site Proton acceptor is the D69. Position 69 (D69) interacts with Mg(2+). Residues S70, 154-157 (FGYD), K177, and 182-183 (HR) contribute to the substrate site.

It belongs to the HAM1 NTPase family. As to quaternary structure, homodimer. Requires Mg(2+) as cofactor.

The enzyme catalyses XTP + H2O = XMP + diphosphate + H(+). The catalysed reaction is dITP + H2O = dIMP + diphosphate + H(+). It carries out the reaction ITP + H2O = IMP + diphosphate + H(+). Functionally, pyrophosphatase that catalyzes the hydrolysis of nucleoside triphosphates to their monophosphate derivatives, with a high preference for the non-canonical purine nucleotides XTP (xanthosine triphosphate), dITP (deoxyinosine triphosphate) and ITP. Seems to function as a house-cleaning enzyme that removes non-canonical purine nucleotides from the nucleotide pool, thus preventing their incorporation into DNA/RNA and avoiding chromosomal lesions. This Vibrio cholerae serotype O1 (strain ATCC 39315 / El Tor Inaba N16961) protein is dITP/XTP pyrophosphatase.